Consider the following 102-residue polypeptide: Small ribosomal subunit protein bS20 (102 aa).

It belongs to the bacterial ribosomal protein bS20 family.

Its function is as follows. Binds directly to 16S ribosomal RNA. The protein is Small ribosomal subunit protein bS20 of Synechococcus sp. (strain WH7803).